We begin with the raw amino-acid sequence, 505 residues long: ATP synthase subunit alpha (505 aa).

169–176 (GDRQIGKT) contacts ATP.

This sequence belongs to the ATPase alpha/beta chains family. In terms of assembly, F-type ATPases have 2 components, CF(1) - the catalytic core - and CF(0) - the membrane proton channel. CF(1) has five subunits: alpha(3), beta(3), gamma(1), delta(1), epsilon(1). CF(0) has three main subunits: a(1), b(2) and c(9-12). The alpha and beta chains form an alternating ring which encloses part of the gamma chain. CF(1) is attached to CF(0) by a central stalk formed by the gamma and epsilon chains, while a peripheral stalk is formed by the delta and b chains.

It is found in the cell inner membrane. It catalyses the reaction ATP + H2O + 4 H(+)(in) = ADP + phosphate + 5 H(+)(out). Functionally, produces ATP from ADP in the presence of a proton gradient across the membrane. The alpha chain is a regulatory subunit. This Desulfosudis oleivorans (strain DSM 6200 / JCM 39069 / Hxd3) (Desulfococcus oleovorans) protein is ATP synthase subunit alpha.